The sequence spans 103 residues: Small ribosomal subunit protein uS10 (103 aa).

Belongs to the universal ribosomal protein uS10 family. Part of the 30S ribosomal subunit.

Its function is as follows. Involved in the binding of tRNA to the ribosomes. The chain is Small ribosomal subunit protein uS10 from Colwellia psychrerythraea (strain 34H / ATCC BAA-681) (Vibrio psychroerythus).